The following is a 341-amino-acid chain: Protein BIG GRAIN 1-like C (341 aa).

Disordered regions lie at residues 28–61 (DGLQ…LTTL) and 76–138 (SSTT…SDDD). Residues 52-61 (NKKDDKLTTL) show a composition bias toward basic and acidic residues. The segment covering 76 to 92 (SSTTTTNSSDSSSFSSS) has biased composition (low complexity). A compositionally biased stretch (basic and acidic residues) spans 105-138 (KLAEQGKRSGDERQRTKRTVMDNDSRLFSKSDDD).

The protein belongs to the BIG GRAIN 1 (BG1) plant protein family.

The protein resides in the cell membrane. Involved in auxin transport. Regulator of the auxin signaling pathway. The protein is Protein BIG GRAIN 1-like C of Arabidopsis thaliana (Mouse-ear cress).